The sequence spans 358 residues: Putative pyruvyl transferase EpsI (358 aa).

The protein belongs to the polysaccharide pyruvyl transferase family.

In terms of biological role, may be involved in the production of the exopolysaccharide (EPS) component of the extracellular matrix during biofilm formation. EPS is responsible for the adhesion of chains of cells into bundles. The chain is Putative pyruvyl transferase EpsI (epsI) from Bacillus subtilis (strain 168).